Reading from the N-terminus, the 98-residue chain is NADH-ubiquinone oxidoreductase chain 4L (98 aa).

The next 3 membrane-spanning stretches (helical) occupy residues 1-21 (MSLTYMNMFMAFTISLLGLLM), 29-49 (SLLCLEGMMLSLFVMMTMAIL), and 61-81 (IILLVFAACEAALGLSLLVMV).

Belongs to the complex I subunit 4L family. As to quaternary structure, core subunit of respiratory chain NADH dehydrogenase (Complex I) which is composed of 45 different subunits.

The protein localises to the mitochondrion inner membrane. It catalyses the reaction a ubiquinone + NADH + 5 H(+)(in) = a ubiquinol + NAD(+) + 4 H(+)(out). Its function is as follows. Core subunit of the mitochondrial membrane respiratory chain NADH dehydrogenase (Complex I) which catalyzes electron transfer from NADH through the respiratory chain, using ubiquinone as an electron acceptor. Part of the enzyme membrane arm which is embedded in the lipid bilayer and involved in proton translocation. This is NADH-ubiquinone oxidoreductase chain 4L (MT-ND4L) from Vampyressa melissa (Melissa's yellow-eared bat).